We begin with the raw amino-acid sequence, 386 residues long: NifS-like protein (386 aa).

Pyridoxal 5'-phosphate contacts are provided by residues 58–59 and 184–186; these read SE and SIN.

The protein belongs to the class-V pyridoxal-phosphate-dependent aminotransferase family. NifS/IscS subfamily. Pyridoxal 5'-phosphate serves as cofactor.

Its subcellular location is the virion. The sequence is that of NifS-like protein from Ornithodoros (relapsing fever ticks).